The sequence spans 455 residues: GTPase Der (455 aa).

2 consecutive EngA-type G domains span residues 4-169 and 178-353; these read PIVA…PPKH and IQMA…EQHR. GTP is bound by residues 10-17, 57-61, 120-123, 184-191, 231-235, and 296-299; these read GRPNVGKS, DTGGL, NKCE, DTAGI, and NKWD. In terms of domain architecture, KH-like spans 354-439; that stretch reads RRVSTSVVNE…PLKLFWRGKQ (86 aa).

It belongs to the TRAFAC class TrmE-Era-EngA-EngB-Septin-like GTPase superfamily. EngA (Der) GTPase family. Associates with the 50S ribosomal subunit.

GTPase that plays an essential role in the late steps of ribosome biogenesis. The protein is GTPase Der of Prochlorococcus marinus (strain MIT 9313).